The chain runs to 47 residues: Delta-halcutoxin-Hcg1a (47 aa).

Intrachain disulfides connect C3–C43, C5–C33, and C26–C44.

The protein belongs to the sea anemone sodium channel inhibitory toxin family. Type II subfamily.

The protein resides in the secreted. The protein localises to the nematocyst. Is potently lethal to crabs, although it showed neither lethal activity in mice nor hemolytic activity. May bind to voltage-gated sodium channels (Nav), thereby delaying their inactivation during signal transduction. This Isohalcurias carlgreni (Sea anemone) protein is Delta-halcutoxin-Hcg1a.